The sequence spans 556 residues: Beta-hexosaminidase subunit beta (556 aa).

Residues 1 to 42 (MELCGLGLPRPPMLLALLLATLLAAMLALLTQVALVVQVAEA) form the signal peptide. Positions 43–121 (ARAPSVSAKP…HHEPAEFQAK (79 aa)) are excised as a propeptide. An N-linked (GlcNAc...) asparagine glycan is attached at N84. Residues C91 and C137 are joined by a disulfide bond. N-linked (GlcNAc...) asparagine glycosylation is found at N142, N190, and N327. 2 disulfide bridges follow: C309–C360 and C534–C551. E355 functions as the Proton donor in the catalytic mechanism.

The protein belongs to the glycosyl hydrolase 20 family. In terms of assembly, there are 3 forms of beta-hexosaminidase: hexosaminidase A is a heterodimer composed of one subunit alpha and one subunit beta (chain A and B); hexosaminidase B is a homodimer of two beta subunits (two chains A and B); hexosaminidase S is a homodimer of two alpha subunits. The composition of the dimer (isozyme A versus isozyme S) has a significant effect on the substrate specificity of the alpha subunit active site. N-linked glycans at Asn-142 and Asn-190 consist of Man(3)-GlcNAc(2) and Man(5 to 7)-GlcNAc(2), respectively. Post-translationally, the beta-A and beta-B chains are produced by proteolytic processing of the precursor beta chain.

It localises to the lysosome. It is found in the cytoplasmic vesicle. Its subcellular location is the secretory vesicle. The protein resides in the cortical granule. It carries out the reaction Hydrolysis of terminal non-reducing N-acetyl-D-hexosamine residues in N-acetyl-beta-D-hexosaminides.. The catalysed reaction is N-acetyl-beta-D-galactosaminyl-(1-&gt;4)-beta-D-3-sulfogalactosyl-(1-&gt;4)-beta-D-glucosyl-(1&lt;-&gt;1')-ceramide + H2O = a beta-D-3-sulfogalactosyl-(1-&gt;4)-beta-D-glucosyl-(1&lt;-&gt;1')-ceramide + N-acetyl-beta-D-galactosamine. It catalyses the reaction a ganglioside GM2 (d18:1(4E)) + H2O = a ganglioside GM3 (d18:1(4E)) + N-acetyl-beta-D-galactosamine. The enzyme catalyses a ganglioside GM2 + H2O = a ganglioside GM3 + N-acetyl-beta-D-galactosamine. It carries out the reaction beta-D-GalNAc-(1-&gt;4)-alpha-L-IdoA-(1-&gt;3)-beta-D-GalNAc-4-sulfate-(1-&gt;4)-alpha-L-IdoA-(1-&gt;3)-D-GalNAc-4-sulfate + H2O = alpha-L-IdoA-(1-&gt;3)-beta-D-GalNAc-4-sulfate-(1-&gt;4)-alpha-L-IdoA-(1-&gt;3)-D-GalNAc-4-sulfate + N-acetyl-D-galactosamine. The catalysed reaction is N-acetyl-beta-D-6-sulfogalactosaminyl-(1-&gt;4)-alpha-L-iduronyl-(1-&gt;3)-N-acetyl-D-6-sulfogalactosamine + H2O = alpha-L-iduronyl-(1-&gt;3)-N-acetyl-D-6-sulfogalactosamine + N-acetyl-D-6-sulfogalactosamine. Its activity is regulated as follows. Addition of GM2A stimulates the hydrolysis of sulfated glycosphingolipid SM2 and the ganglioside GM2. Functionally, hydrolyzes the non-reducing end N-acetyl-D-hexosamine and/or sulfated N-acetyl-D-hexosamine of glycoconjugates, such as the oligosaccharide moieties from proteins and neutral glycolipids, or from certain mucopolysaccharides. The isozyme B does not hydrolyze each of these substrates, however hydrolyzes efficiently neutral oligosaccharide. Only the isozyme A is responsible for the degradation of GM2 gangliosides in the presence of GM2A. During fertilization is responsible, at least in part, for the zona block to polyspermy. Present in the cortical granules of non-activated oocytes, is exocytosed during the cortical reaction in response to oocyte activation and inactivates the sperm galactosyltransferase-binding site, accounting for the block in sperm binding to the zona pellucida. The protein is Beta-hexosaminidase subunit beta of Homo sapiens (Human).